A 971-amino-acid polypeptide reads, in one-letter code: Valine--tRNA ligase (971 aa).

The short motif at 55–65 is the 'HIGH' region element; the sequence is PNVTGSLHMGH. The 'KMSKS' region motif lies at 572–576; it reads KMSKS. Lys-575 serves as a coordination point for ATP. A coiled-coil region spans residues 906–933; sequence KAELGRLQKDLDKVQKQHDQIASKLANE.

This sequence belongs to the class-I aminoacyl-tRNA synthetase family. ValS type 1 subfamily. Monomer.

Its subcellular location is the cytoplasm. The enzyme catalyses tRNA(Val) + L-valine + ATP = L-valyl-tRNA(Val) + AMP + diphosphate. Catalyzes the attachment of valine to tRNA(Val). As ValRS can inadvertently accommodate and process structurally similar amino acids such as threonine, to avoid such errors, it has a 'posttransfer' editing activity that hydrolyzes mischarged Thr-tRNA(Val) in a tRNA-dependent manner. This Acinetobacter baylyi (strain ATCC 33305 / BD413 / ADP1) protein is Valine--tRNA ligase.